The chain runs to 65 residues: U11-theraphotoxin-Cg1a (65 aa).

The N-terminal stretch at 1 to 21 is a signal peptide; sequence MKTTILLVILGLTLLFALSAA. Positions 22–29 are excised as a propeptide; sequence TELKDEER. 3 disulfide bridges follow: Cys-31/Cys-45, Cys-38/Cys-50, and Cys-44/Cys-57.

Belongs to the neurotoxin 10 (Hwtx-1) family. 32 (Jztx-16) subfamily. As to expression, expressed by the venom gland.

It is found in the secreted. Probable ion channel inhibitor. The protein is U11-theraphotoxin-Cg1a of Chilobrachys guangxiensis (Chinese earth tiger tarantula).